The primary structure comprises 341 residues: Glycerol-3-phosphate dehydrogenase [NAD(P)+] (341 aa).

The NADPH site is built by Ser14, Phe15, Arg35, and Lys108. The sn-glycerol 3-phosphate site is built by Lys108 and Gly136. Ala140 provides a ligand contact to NADPH. Residues Lys191, Asp244, Ser254, Arg255, and Asn256 each coordinate sn-glycerol 3-phosphate. The active-site Proton acceptor is Lys191. An NADPH-binding site is contributed by Arg255. Positions 279 and 281 each coordinate NADPH.

This sequence belongs to the NAD-dependent glycerol-3-phosphate dehydrogenase family.

It is found in the cytoplasm. The catalysed reaction is sn-glycerol 3-phosphate + NAD(+) = dihydroxyacetone phosphate + NADH + H(+). It carries out the reaction sn-glycerol 3-phosphate + NADP(+) = dihydroxyacetone phosphate + NADPH + H(+). The protein operates within membrane lipid metabolism; glycerophospholipid metabolism. Its function is as follows. Catalyzes the reduction of the glycolytic intermediate dihydroxyacetone phosphate (DHAP) to sn-glycerol 3-phosphate (G3P), the key precursor for phospholipid synthesis. The chain is Glycerol-3-phosphate dehydrogenase [NAD(P)+] from Pseudomonas savastanoi pv. phaseolicola (strain 1448A / Race 6) (Pseudomonas syringae pv. phaseolicola (strain 1448A / Race 6)).